The sequence spans 95 residues: Small ribosomal subunit protein bS20c (95 aa).

The protein belongs to the bacterial ribosomal protein bS20 family.

The protein localises to the plastid. Its subcellular location is the cyanelle. Functionally, binds directly to 16S ribosomal RNA. This chain is Small ribosomal subunit protein bS20c (rps20), found in Cyanophora paradoxa.